The following is a 101-amino-acid chain: Protein Tat (101 aa).

An interaction with human CREBBP region spans residues 1 to 24; it reads MEPVDPNREPWNHPGSQPKTACTN. The interval 1–48 is transactivation; sequence MEPVDPNREPWNHPGSQPKTACTNCYCKKCCYHCQVCFLQKGLGISYG. Residues C22, C25, and C27 each contribute to the Zn(2+) site. The tract at residues 22 to 37 is cysteine-rich; sequence CTNCYCKKCCYHCQVC. K28 is modified (N6-acetyllysine; by host PCAF). Residues C30, H33, C34, and C37 each contribute to the Zn(2+) site. The tract at residues 38-48 is core; the sequence is FLQKGLGISYG. A disordered region spans residues 48 to 101; sequence GRKKRRQRRSAPPGSKTHQDLIPKQPLSQTQRKPTGPEESKKEVESKAEPDRFD. A Nuclear localization signal, RNA-binding (TAR), and protein transduction motif is present at residues 49-57; it reads RKKRRQRRS. The interval 49–86 is interaction with the host capping enzyme RNGTT; the sequence is RKKRRQRRSAPPGSKTHQDLIPKQPLSQTQRKPTGPEE. 2 positions are modified to N6-acetyllysine; by host EP300 and GCN5L2: K50 and K51. Asymmetric dimethylarginine; by host PRMT6 is present on residues R52 and R53. A Glycyl lysine isopeptide (Lys-Gly) (interchain with G-Cter in ubiquitin) cross-link involves residue K71. Over residues 82 to 101 the composition is skewed to basic and acidic residues; the sequence is TGPEESKKEVESKAEPDRFD.

This sequence belongs to the lentiviruses Tat family. In terms of assembly, interacts with host CCNT1. Associates with the P-TEFb complex composed at least of Tat, P-TEFb (CDK9 and CCNT1), TAR RNA, RNA Pol II. Recruits the HATs CREBBP, TAF1/TFIID, EP300, PCAF and GCN5L2. Interacts with host KAT5/Tip60; this interaction targets the latter to degradation. Interacts with the host deacetylase SIRT1. Interacts with host capping enzyme RNGTT; this interaction stimulates RNGTT. Binds to host KDR, and to the host integrins ITGAV/ITGB3 and ITGA5/ITGB1. Interacts with host KPNB1/importin beta-1 without previous binding to KPNA1/importin alpha-1. Interacts with EIF2AK2. Interacts with host nucleosome assembly protein NAP1L1; this interaction may be required for the transport of Tat within the nucleus, since the two proteins interact at the nuclear rim. Interacts with host C1QBP/SF2P32; this interaction involves lysine-acetylated Tat. Interacts with the host chemokine receptors CCR2, CCR3 and CXCR4. Interacts with host DPP4/CD26; this interaction may trigger an anti-proliferative effect. Interacts with host LDLR. Interacts with the host extracellular matrix metalloproteinase MMP1. Interacts with host PRMT6; this interaction mediates Tat's methylation. Interacts with, and is ubiquitinated by MDM2/Hdm2. Interacts with host PSMC3 and HTATIP2. Interacts with STAB1; this interaction may overcome SATB1-mediated repression of IL2 and IL2RA (interleukin) in T cells by binding to the same domain than HDAC1. Interacts (when acetylated) with human CDK13, thereby increasing HIV-1 mRNA splicing and promoting the production of the doubly spliced HIV-1 protein Nef. Interacts with host TBP; this interaction modulates the activity of transcriptional pre-initiation complex. Interacts with host RELA. Interacts with host PLSCR1; this interaction negatively regulates Tat transactivation activity by altering its subcellular distribution. Post-translationally, asymmetrical arginine methylation by host PRMT6 seems to diminish the transactivation capacity of Tat and affects the interaction with host CCNT1. Acetylation by EP300, CREBBP, GCN5L2/GCN5 and PCAF regulates the transactivation activity of Tat. EP300-mediated acetylation of Lys-50 promotes dissociation of Tat from the TAR RNA through the competitive binding to PCAF's bromodomain. In addition, the non-acetylated Tat's N-terminus can also interact with PCAF. PCAF-mediated acetylation of Lys-28 enhances Tat's binding to CCNT1. Lys-50 is deacetylated by SIRT1. In terms of processing, polyubiquitination by host MDM2 does not target Tat to degradation, but activates its transactivation function and fosters interaction with CCNT1 and TAR RNA. Post-translationally, phosphorylated by EIF2AK2 on serine and threonine residues adjacent to the basic region important for TAR RNA binding and function. Phosphorylation of Tat by EIF2AK2 is dependent on the prior activation of EIF2AK2 by dsRNA.

The protein resides in the host nucleus. The protein localises to the host nucleolus. It is found in the host cytoplasm. Its subcellular location is the secreted. Its function is as follows. Transcriptional activator that increases RNA Pol II processivity, thereby increasing the level of full-length viral transcripts. Recognizes a hairpin structure at the 5'-LTR of the nascent viral mRNAs referred to as the transactivation responsive RNA element (TAR) and recruits the cyclin T1-CDK9 complex (P-TEFb complex) that will in turn hyperphosphorylate the RNA polymerase II to allow efficient elongation. The CDK9 component of P-TEFb and other Tat-activated kinases hyperphosphorylate the C-terminus of RNA Pol II that becomes stabilized and much more processive. Other factors such as HTATSF1/Tat-SF1, SUPT5H/SPT5, and HTATIP2 are also important for Tat's function. Besides its effect on RNA Pol II processivity, Tat induces chromatin remodeling of proviral genes by recruiting the histone acetyltransferases (HATs) CREBBP, EP300 and PCAF to the chromatin. This also contributes to the increase in proviral transcription rate, especially when the provirus integrates in transcriptionally silent region of the host genome. To ensure maximal activation of the LTR, Tat mediates nuclear translocation of NF-kappa-B by interacting with host RELA. Through its interaction with host TBP, Tat may also modulate transcription initiation. Tat can reactivate a latently infected cell by penetrating in it and transactivating its LTR promoter. In the cytoplasm, Tat is thought to act as a translational activator of HIV-1 mRNAs. Functionally, extracellular circulating Tat can be endocytosed by surrounding uninfected cells via the binding to several surface receptors such as CD26, CXCR4, heparan sulfate proteoglycans (HSPG) or LDLR. Neurons are rarely infected, but they internalize Tat via their LDLR. Through its interaction with nuclear HATs, Tat is potentially able to control the acetylation-dependent cellular gene expression. Modulates the expression of many cellular genes involved in cell survival, proliferation or in coding for cytokines or cytokine receptors. Tat plays a role in T-cell and neurons apoptosis. Tat induced neurotoxicity and apoptosis probably contribute to neuroAIDS. Circulating Tat also acts as a chemokine-like and/or growth factor-like molecule that binds to specific receptors on the surface of the cells, affecting many cellular pathways. In the vascular system, Tat binds to ITGAV/ITGB3 and ITGA5/ITGB1 integrins dimers at the surface of endothelial cells and competes with bFGF for heparin-binding sites, leading to an excess of soluble bFGF. This chain is Protein Tat, found in Homo sapiens (Human).